A 235-amino-acid polypeptide reads, in one-letter code: Probable transglycosylase SceD (235 aa).

Residues 1–26 (MKKTIIASSLAVGLGVVAGNAGHADA) form the signal peptide. Residues 90 to 159 (QQDVSAQAST…NASSGSSVNV (70 aa)) form a disordered region. The segment covering 99–110 (TVSNQTSAEQVG) has biased composition (polar residues). A compositionally biased stretch (low complexity) spans 111–159 (SQQQSSQAQPTQTQQAPQTEQTQQPQTEATTSNSSSSNNNASSGSSVNV).

Belongs to the transglycosylase family. SceD subfamily.

The protein localises to the secreted. Its function is as follows. Is able to cleave peptidoglycan and affects clumping and separation of bacterial cells. The chain is Probable transglycosylase SceD (sceD) from Staphylococcus haemolyticus (strain JCSC1435).